A 179-amino-acid chain; its full sequence is uncharacterized protein (179 aa).

Positions 1–19 (MNTNVFRLLLLGSLFSLSA) are cleaved as a signal peptide. The N-palmitoyl cysteine moiety is linked to residue Cys-20. A lipid anchor (S-diacylglycerol cysteine) is attached at Cys-20.

The protein localises to the cell membrane. This is an uncharacterized protein from Escherichia coli (strain K12).